The sequence spans 227 residues: N-(5'-phosphoribosyl)anthranilate isomerase (227 aa).

This sequence belongs to the TrpF family.

The enzyme catalyses N-(5-phospho-beta-D-ribosyl)anthranilate = 1-(2-carboxyphenylamino)-1-deoxy-D-ribulose 5-phosphate. It functions in the pathway amino-acid biosynthesis; L-tryptophan biosynthesis; L-tryptophan from chorismate: step 3/5. The chain is N-(5'-phosphoribosyl)anthranilate isomerase from Herminiimonas arsenicoxydans.